The primary structure comprises 348 residues: Fructose-1,6-bisphosphatase class 1 2 (348 aa).

4 residues coordinate Mg(2+): Glu93, Asp117, Leu119, and Asp120. Residues 120-123 (DGSS), Asn213, Tyr244, and Lys274 each bind substrate. Residue Glu280 participates in Mg(2+) binding.

It belongs to the FBPase class 1 family. Homotetramer. Requires Mg(2+) as cofactor.

The protein resides in the cytoplasm. It carries out the reaction beta-D-fructose 1,6-bisphosphate + H2O = beta-D-fructose 6-phosphate + phosphate. It participates in carbohydrate biosynthesis; gluconeogenesis. This Christiangramia forsetii (strain DSM 17595 / CGMCC 1.15422 / KT0803) (Gramella forsetii) protein is Fructose-1,6-bisphosphatase class 1 2.